The primary structure comprises 531 residues: Peptide chain release factor 3 (531 aa).

The tr-type G domain occupies 13–282 (AKRRTFAIIS…TLIEHAPPPK (270 aa)). GTP-binding positions include 22–29 (SHPDAGKT), 90–94 (DTPGH), and 144–147 (NKLD).

Belongs to the TRAFAC class translation factor GTPase superfamily. Classic translation factor GTPase family. PrfC subfamily.

The protein resides in the cytoplasm. Increases the formation of ribosomal termination complexes and stimulates activities of RF-1 and RF-2. It binds guanine nucleotides and has strong preference for UGA stop codons. It may interact directly with the ribosome. The stimulation of RF-1 and RF-2 is significantly reduced by GTP and GDP, but not by GMP. The sequence is that of Peptide chain release factor 3 from Psychrobacter sp. (strain PRwf-1).